The sequence spans 320 residues: Homoserine kinase (320 aa).

100–110 (PLSSGMGSSAA) is a binding site for ATP.

Belongs to the GHMP kinase family. Homoserine kinase subfamily.

Its subcellular location is the cytoplasm. It catalyses the reaction L-homoserine + ATP = O-phospho-L-homoserine + ADP + H(+). It functions in the pathway amino-acid biosynthesis; L-threonine biosynthesis; L-threonine from L-aspartate: step 4/5. In terms of biological role, catalyzes the ATP-dependent phosphorylation of L-homoserine to L-homoserine phosphate. The protein is Homoserine kinase of Chlorobium phaeobacteroides (strain DSM 266 / SMG 266 / 2430).